Consider the following 412-residue polypeptide: Gamma-glutamyl phosphate reductase (412 aa).

The protein belongs to the gamma-glutamyl phosphate reductase family.

Its subcellular location is the cytoplasm. The enzyme catalyses L-glutamate 5-semialdehyde + phosphate + NADP(+) = L-glutamyl 5-phosphate + NADPH + H(+). The protein operates within amino-acid biosynthesis; L-proline biosynthesis; L-glutamate 5-semialdehyde from L-glutamate: step 2/2. In terms of biological role, catalyzes the NADPH-dependent reduction of L-glutamate 5-phosphate into L-glutamate 5-semialdehyde and phosphate. The product spontaneously undergoes cyclization to form 1-pyrroline-5-carboxylate. This is Gamma-glutamyl phosphate reductase from Actinobacillus pleuropneumoniae serotype 5b (strain L20).